Reading from the N-terminus, the 282-residue chain is Para-Rep C1 (282 aa).

Residues Met1 to Pro99 enclose the CRESS-DNA virus Rep endonuclease domain. An RCR-1 motif is present at residues Cys7–Leu10. Glu38 and His47 together coordinate a divalent metal cation. The short motif at His47 to Gln49 is the RCR-2 element. The Nuclear localization signal motif lies at Lys56 to Lys77. Catalysis depends on Tyr86, which acts as the For DNA cleavage activity. Residues Tyr86 to Lys89 carry the RCR-3 motif. Ser94 contacts a divalent metal cation. Gly174–Ser182 serves as a coordination point for ATP.

Belongs to the nanoviridea/circoviridae replication-associated protein family. In terms of assembly, homooligomer (Potential). Rep binds to repeated DNA motifs (iterons). Mg(2+) serves as cofactor. Requires Mn(2+) as cofactor.

It localises to the host nucleus. The catalysed reaction is ATP + H2O = ADP + phosphate + H(+). Its function is as follows. Initiates and terminates the replication only of its own subviral DNA molecule. The closed circular ssDNA genome is first converted to a superhelical dsDNA. Rep binds a specific hairpin at the genome origin of replication. Introduces an endonucleolytic nick within the intergenic region of the genome, thereby initiating the rolling circle replication (RCR). Following cleavage, binds covalently to the 5'-phosphate of DNA as a tyrosyl ester. The cleavage gives rise to a free 3'-OH that serves as a primer for the cellular DNA polymerase. The polymerase synthesizes the (+) strand DNA by rolling circle mechanism. After one round of replication, a Rep-catalyzed nucleotidyl transfer reaction releases a circular single-stranded virus genome, thereby terminating the replication. Displays origin-specific DNA cleavage, nucleotidyl transferase, ATPase and helicase activities. This chain is Para-Rep C1 (C1), found in Faba bean necrotic yellows C11 alphasatellite (FBNYC11A).